Here is a 394-residue protein sequence, read N- to C-terminus: Elongation factor Tu (394 aa).

The 195-residue stretch at 10-204 (KPHVNVGTIG…ALDSYIPEPE (195 aa)) folds into the tr-type G domain. The G1 stretch occupies residues 19-26 (GHVDHGKT). 19 to 26 (GHVDHGKT) contacts GTP. Threonine 26 is a binding site for Mg(2+). Residues 60–64 (GITIA) are G2. Residues 81–84 (DCPG) are G3. GTP is bound by residues 81 to 85 (DCPGH) and 136 to 139 (NKCD). Residues 136–139 (NKCD) form a G4 region. The tract at residues 174 to 176 (SAL) is G5.

It belongs to the TRAFAC class translation factor GTPase superfamily. Classic translation factor GTPase family. EF-Tu/EF-1A subfamily. Monomer.

The protein resides in the cytoplasm. The catalysed reaction is GTP + H2O = GDP + phosphate + H(+). GTP hydrolase that promotes the GTP-dependent binding of aminoacyl-tRNA to the A-site of ribosomes during protein biosynthesis. The polypeptide is Elongation factor Tu (Vibrio campbellii (strain ATCC BAA-1116)).